The primary structure comprises 334 residues: Large ribosomal subunit protein uL3 (334 aa).

Residues M1–R10 show a composition bias toward basic residues. Residues M1–A21 form a disordered region.

The protein belongs to the universal ribosomal protein uL3 family. In terms of assembly, part of the 50S ribosomal subunit. Forms a cluster with proteins L14 and L24e.

Functionally, one of the primary rRNA binding proteins, it binds directly near the 3'-end of the 23S rRNA, where it nucleates assembly of the 50S subunit. The sequence is that of Large ribosomal subunit protein uL3 from Methanococcus vannielii (strain ATCC 35089 / DSM 1224 / JCM 13029 / OCM 148 / SB).